The chain runs to 340 residues: tRNA N6-adenosine threonylcarbamoyltransferase (340 aa).

Fe cation is bound by residues H111 and H115. Residues 134-138 (LVSGG), D167, G180, and N276 each bind substrate. D304 contacts Fe cation.

This sequence belongs to the KAE1 / TsaD family. The cofactor is Fe(2+).

The protein localises to the cytoplasm. It carries out the reaction L-threonylcarbamoyladenylate + adenosine(37) in tRNA = N(6)-L-threonylcarbamoyladenosine(37) in tRNA + AMP + H(+). Its function is as follows. Required for the formation of a threonylcarbamoyl group on adenosine at position 37 (t(6)A37) in tRNAs that read codons beginning with adenine. Is involved in the transfer of the threonylcarbamoyl moiety of threonylcarbamoyl-AMP (TC-AMP) to the N6 group of A37, together with TsaE and TsaB. TsaD likely plays a direct catalytic role in this reaction. This is tRNA N6-adenosine threonylcarbamoyltransferase from Helicobacter pylori (strain Shi470).